The following is a 1776-amino-acid chain: TOG array regulator of axonemal microtubules protein 1 (1776 aa).

2 TOG regions span residues 94–311 (EEET…RRLE) and 351–595 (PQEL…MPSS). HEAT repeat units follow at residues 175 to 212 (AFSLALLPQLVVSLREDNPALRKDALQILHICLRRSSG), 214 to 246 (VLRTLIQGLESPDARLRASTALLLPILFTPEDL), 250 to 288 (LDLTEVIISLARKLGDQEMEEESETAFSSLQQIGERLGQ), 344 to 383 (NLKFEIIPQELHARLLDQEDYKNRTQAVEELKQLLGKFNP), 389 to 426 (ASLVGFISLLYNLLDDSNFKVVHGTLQVLHLLVIRLGE), 430 to 465 (QFLGPVIAASVKVLADNKLVIKQEYMKIFLKLMKEV), 466 to 503 (GPQRVLSLLLENLKHKHSRVREEVVNICICSLLTYPSE), and 505 to 542 (FDLPKLSFDLAPALVDSKRRVRQAALEAFAVLASSMGS). 4 disordered regions span residues 655-676 (KNKLPWENEQPGVMGENQTSNS), 817-921 (ILPS…RGIN), 970-1000 (HSSLRSLRNSAAKKRAKLSGSSSTSDVDSPD), and 1062-1084 (TRLSSAKKTSHAAEQSPSAGFTR). Polar residues-rich tracts occupy residues 826–836 (PRTSPKHTSPL), 845–855 (DNSISFSNSWP), and 871–892 (LANQKSSDPTGENFQEKTTAVQ). Residues 988–1000 (SGSSSTSDVDSPD) show a composition bias toward low complexity. The interval 1259 to 1481 (DIALTEALRL…YIKESVKNLR (223 aa)) is TOG 3. HEAT repeat units lie at residues 1297-1334 (TKLHETTFAVVQEVKNLRSGVSRAAVVCLGDLFTYLKK) and 1338-1375 (QELDSAVRALLHKAGESNTFIREDVDKALKAMVNNVTP). The segment at 1493–1536 (ASAKGRRSHPGSVGNTRSSSVSRDAFSSSEREVTEVREVPRKSA) is disordered. The span at 1509–1520 (RSSSVSRDAFSS) shows a compositional bias: low complexity. Residues 1521 to 1533 (SEREVTEVREVPR) are compositionally biased toward basic and acidic residues. The interval 1540-1776 (SLESAEYIKV…LLDVTVLSEL (237 aa)) is TOG 4. HEAT repeat units lie at residues 1541 to 1578 (LESAEYIKVITGLLNAKDFRDRINGIKQLLSDTENNQE), 1582 to 1619 (GNIVKIFDAFKSRLHDSNSKVNLVALETMHKMIPLLRD), and 1623 to 1661 (PIINMLIPAIVDNNLNSKNPGIYAAATNVVHALSQHVDN).

This sequence belongs to the Crescerin family. As to quaternary structure, interacts with ARMC9. Interacts with CCDC66, CEP104 and CSPP1.

Its subcellular location is the cell projection. The protein resides in the cilium. It localises to the cytoplasm. The protein localises to the cytoskeleton. It is found in the cilium axoneme. Functionally, involved in ciliogenesis. It is required for appropriate acetylation and polyglutamylation of ciliary microtubules, and regulation of cilium length. Interacts with microtubules and promotes microtubule polymerization via its HEAT repeat domains, especially those in TOG region 2 and 4. The protein is TOG array regulator of axonemal microtubules protein 1 (Togaram1) of Mus musculus (Mouse).